Consider the following 367-residue polypeptide: Ribosome-binding ATPase YchF (367 aa).

The region spanning 2–258 (LSAGIVGLPN…LKLEQRQYFL (257 aa)) is the OBG-type G domain. 11-16 (NVGKST) serves as a coordination point for ATP. 2 residues coordinate Mg(2+): Ser-15 and Thr-35. One can recognise a TGS domain in the interval 281–364 (NLWSFFTFGK…KDGDVCNFKF (84 aa)).

The protein belongs to the TRAFAC class OBG-HflX-like GTPase superfamily. OBG GTPase family. YchF/OLA1 subfamily. It depends on Mg(2+) as a cofactor.

In terms of biological role, ATPase that binds to both the 70S ribosome and the 50S ribosomal subunit in a nucleotide-independent manner. The chain is Ribosome-binding ATPase YchF from Mycoplasma genitalium (strain ATCC 33530 / DSM 19775 / NCTC 10195 / G37) (Mycoplasmoides genitalium).